The chain runs to 73 residues: Small ribosomal subunit protein bS18 (73 aa).

Belongs to the bacterial ribosomal protein bS18 family. Part of the 30S ribosomal subunit. Forms a tight heterodimer with protein bS6.

Binds as a heterodimer with protein bS6 to the central domain of the 16S rRNA, where it helps stabilize the platform of the 30S subunit. The chain is Small ribosomal subunit protein bS18 from Coxiella burnetii (strain Dugway 5J108-111).